Reading from the N-terminus, the 344-residue chain is Probable Delta(7)-sterol 5(6)-desaturase (344 aa).

Helical transmembrane passes span 76-96, 123-143, and 160-180; these read LSLFLILWLFGLVTYYVFASL, QTNAALPVMAFFTFPFLVAEV, and WYDFFQFPLFIMFTDFGIYWI. The 126-residue stretch at 167–292 folds into the Fatty acid hydroxylase domain; sequence PLFIMFTDFG…FTTLWDRLGG (126 aa). The short motif at 181–185 is the Histidine box-1 element; that stretch reads HRGLH. The Histidine box-2 signature appears at 194 to 198; it reads HKPHH. Residues 224–244 traverse the membrane as a helical segment; sequence HIFPFIFPLQKMAYVGLFVFI. The short motif at 269 to 273 is the Histidine box-3 element; the sequence is HSVHH.

It belongs to the sterol desaturase family. Fe cation is required as a cofactor.

It localises to the endoplasmic reticulum membrane. It catalyses the reaction a Delta(7)-sterol + 2 Fe(II)-[cytochrome b5] + O2 + 2 H(+) = a Delta(5),Delta(7)-sterol + 2 Fe(III)-[cytochrome b5] + 2 H2O. It participates in steroid metabolism; ergosterol biosynthesis; ergosterol from zymosterol: step 3/5. In terms of biological role, catalyzes the introduction of a C-5 double bond in the B ring of ergosterol. May contribute to the regulation of ergosterol biosynthesis. This Neurospora crassa (strain ATCC 24698 / 74-OR23-1A / CBS 708.71 / DSM 1257 / FGSC 987) protein is Probable Delta(7)-sterol 5(6)-desaturase.